The primary structure comprises 1020 residues: Mediator of RNA polymerase II transcription subunit 16 (1020 aa).

Belongs to the Mediator complex subunit 16 family. In terms of assembly, component of the Mediator complex.

The protein localises to the nucleus. Its function is as follows. Component of the Mediator complex, a coactivator involved in the regulated transcription of nearly all RNA polymerase II-dependent genes. Mediator functions as a bridge to convey information from gene-specific regulatory proteins to the basal RNA polymerase II transcription machinery. Mediator is recruited to promoters by direct interactions with regulatory proteins and serves as a scaffold for the assembly of a functional preinitiation complex with RNA polymerase II and the general transcription factors. The protein is Mediator of RNA polymerase II transcription subunit 16 (SIN4) of Scheffersomyces stipitis (strain ATCC 58785 / CBS 6054 / NBRC 10063 / NRRL Y-11545) (Yeast).